We begin with the raw amino-acid sequence, 154 residues long: SsrA-binding protein (154 aa).

It belongs to the SmpB family.

The protein resides in the cytoplasm. In terms of biological role, required for rescue of stalled ribosomes mediated by trans-translation. Binds to transfer-messenger RNA (tmRNA), required for stable association of tmRNA with ribosomes. tmRNA and SmpB together mimic tRNA shape, replacing the anticodon stem-loop with SmpB. tmRNA is encoded by the ssrA gene; the 2 termini fold to resemble tRNA(Ala) and it encodes a 'tag peptide', a short internal open reading frame. During trans-translation Ala-aminoacylated tmRNA acts like a tRNA, entering the A-site of stalled ribosomes, displacing the stalled mRNA. The ribosome then switches to translate the ORF on the tmRNA; the nascent peptide is terminated with the 'tag peptide' encoded by the tmRNA and targeted for degradation. The ribosome is freed to recommence translation, which seems to be the essential function of trans-translation. This Staphylococcus aureus (strain Mu3 / ATCC 700698) protein is SsrA-binding protein.